Here is a 218-residue protein sequence, read N- to C-terminus: Protein-methionine-sulfoxide reductase heme-binding subunit MsrQ (218 aa).

The next 5 helical transmembrane spans lie at Leu-14–Trp-34, Leu-60–Ile-80, Leu-86–Leu-106, Pro-121–Thr-141, and Leu-155–Lys-175.

This sequence belongs to the MsrQ family. Heterodimer of a catalytic subunit (MsrP) and a heme-binding subunit (MsrQ). The cofactor is FMN. It depends on heme b as a cofactor.

It localises to the cell inner membrane. Part of the MsrPQ system that repairs oxidized periplasmic proteins containing methionine sulfoxide residues (Met-O), using respiratory chain electrons. Thus protects these proteins from oxidative-stress damage caused by reactive species of oxygen and chlorine generated by the host defense mechanisms. MsrPQ is essential for the maintenance of envelope integrity under bleach stress, rescuing a wide series of structurally unrelated periplasmic proteins from methionine oxidation. MsrQ provides electrons for reduction to the reductase catalytic subunit MsrP, using the quinone pool of the respiratory chain. This Xanthomonas axonopodis pv. citri (strain 306) protein is Protein-methionine-sulfoxide reductase heme-binding subunit MsrQ.